The following is a 443-amino-acid chain: Methionine aminopeptidase 2-1 (443 aa).

The disordered stretch occupies residues 1-90; that stretch reads MAAQADDELN…RVPVSELFPN (90 aa). The span at 33 to 48 shows a compositional bias: acidic residues; it reads ADNDDSEDDEKEEEGG. Residues 58 to 73 show a composition bias toward basic residues; the sequence is KKKKKRKPKKKKKGGA. Substrate is bound at residue His196. Residues Asp216, Asp227, and His296 each coordinate a divalent metal cation. Position 304 (His304) interacts with substrate. A divalent metal cation-binding residues include Glu329 and Glu424.

This sequence belongs to the peptidase M24A family. Methionine aminopeptidase eukaryotic type 2 subfamily. The cofactor is Co(2+). It depends on Zn(2+) as a cofactor. Requires Mn(2+) as cofactor. Fe(2+) serves as cofactor.

The protein localises to the cytoplasm. The catalysed reaction is Release of N-terminal amino acids, preferentially methionine, from peptides and arylamides.. Its function is as follows. Cotranslationally removes the N-terminal methionine from nascent proteins. The N-terminal methionine is often cleaved when the second residue in the primary sequence is small and uncharged (Met-Ala-, Cys, Gly, Pro, Ser, Thr, or Val). This is Methionine aminopeptidase 2-1 from Talaromyces stipitatus (strain ATCC 10500 / CBS 375.48 / QM 6759 / NRRL 1006) (Penicillium stipitatum).